Here is a 572-residue protein sequence, read N- to C-terminus: Isocitrate lyase (572 aa).

Serine 104–tryptophan 106 is a binding site for substrate. Aspartate 175 contacts Mg(2+). Cysteine 213 (proton acceptor) is an active-site residue. Substrate contacts are provided by residues glycine 214–histidine 215, arginine 250, asparagine 437–serine 441, and threonine 472. The disordered stretch occupies residues glutamine 550 to methionine 572. A Microbody targeting signal motif is present at residues serine 570–methionine 572.

Belongs to the isocitrate lyase/PEP mutase superfamily. Isocitrate lyase family. It depends on Mg(2+) as a cofactor. As to expression, expressed in leaves.

It is found in the glyoxysome. It carries out the reaction D-threo-isocitrate = glyoxylate + succinate. It functions in the pathway carbohydrate metabolism; glyoxylate cycle; (S)-malate from isocitrate: step 1/2. Functionally, involved in storage lipid mobilization during the growth of higher plant seedling. The protein is Isocitrate lyase of Oryza sativa subsp. japonica (Rice).